Consider the following 245-residue polypeptide: DNA repair protein RecO (245 aa).

It belongs to the RecO family.

In terms of biological role, involved in DNA repair and RecF pathway recombination. The sequence is that of DNA repair protein RecO from Klebsiella pneumoniae subsp. pneumoniae (strain ATCC 700721 / MGH 78578).